A 571-amino-acid chain; its full sequence is Potassium-transporting ATPase potassium-binding subunit (571 aa).

12 helical membrane-spanning segments follow: residues 5–25 (LAAG…YVPV), 60–80 (YGYA…LYAL), 86–106 (VLPL…NTAV), 131–151 (GLAV…VALI), 177–197 (ILLP…VIQS), 247–267 (PTPV…VSLT), 291–311 (LTLL…TLAA), 334–354 (FGIP…TGAV), 386–406 (GLYG…LLVG), 425–445 (ALSV…TVIL), 498–518 (ALGL…LALA), and 547–567 (GTVV…GPIA).

This sequence belongs to the KdpA family. The system is composed of three essential subunits: KdpA, KdpB and KdpC.

It is found in the cell membrane. Its function is as follows. Part of the high-affinity ATP-driven potassium transport (or Kdp) system, which catalyzes the hydrolysis of ATP coupled with the electrogenic transport of potassium into the cytoplasm. This subunit binds the extracellular potassium ions and delivers the ions to the membrane domain of KdpB through an intramembrane tunnel. In Rhodococcus jostii (strain RHA1), this protein is Potassium-transporting ATPase potassium-binding subunit.